Consider the following 270-residue polypeptide: Putative phosphoenolpyruvate synthase regulatory protein (270 aa).

Residue 149-156 (GVSRSGKT) participates in ADP binding.

The protein belongs to the pyruvate, phosphate/water dikinase regulatory protein family. PSRP subfamily.

It catalyses the reaction [pyruvate, water dikinase] + ADP = [pyruvate, water dikinase]-phosphate + AMP + H(+). It carries out the reaction [pyruvate, water dikinase]-phosphate + phosphate + H(+) = [pyruvate, water dikinase] + diphosphate. Its function is as follows. Bifunctional serine/threonine kinase and phosphorylase involved in the regulation of the phosphoenolpyruvate synthase (PEPS) by catalyzing its phosphorylation/dephosphorylation. In Alteromonas mediterranea (strain DSM 17117 / CIP 110805 / LMG 28347 / Deep ecotype), this protein is Putative phosphoenolpyruvate synthase regulatory protein.